The sequence spans 352 residues: Phosphate acyltransferase (352 aa).

Belongs to the PlsX family. Homodimer. Probably interacts with PlsY.

The protein resides in the cytoplasm. The enzyme catalyses a fatty acyl-[ACP] + phosphate = an acyl phosphate + holo-[ACP]. It participates in lipid metabolism; phospholipid metabolism. Catalyzes the reversible formation of acyl-phosphate (acyl-PO(4)) from acyl-[acyl-carrier-protein] (acyl-ACP). This enzyme utilizes acyl-ACP as fatty acyl donor, but not acyl-CoA. The chain is Phosphate acyltransferase from Bordetella bronchiseptica (strain ATCC BAA-588 / NCTC 13252 / RB50) (Alcaligenes bronchisepticus).